We begin with the raw amino-acid sequence, 3291 residues long: MQKELSVALSCPGMKSLRTLLPLLVLLGATVPGSWGQAGSLDLQIDEEQPAGTLIGDISAGLPPGTAPPPMYFISAQEGSGVGTDLAIDEHSGVVRTARVLDRERRDRYRFTAVTPDGATVEVTVRVADINDHAPAFPQARAALQIPEHTALGTRYPLEPARDADAGRLGTQGYALSGDGAGETFRLETRPGPGGAPVPELVIAGELDRENRSHYMLQLEAYDGGSPPRRAQALLDVTLLDINDHAPAFNQSRYHAVVSESLAPGSPVLQVFASDADAGANGAVTYEINRRQSEGDGPFSIDAHTGFLRLERPLDFEQRRVHELVVQARDGGAHPELGSAFVTVHVRDANDNQPSMTVIFLSADGSPRVSEAAPPGQLVARISVSDPDDGDFAHVNVSLEGGEGHFALSTQDSVIYLVCVARRLDREERDVYNLRVTATDSGSPPLRAEAAFVLHVTDVNDNAPAFDRQLYRPEPLPEVALPGSFVVRVTARDPDQGTNGQITYSLAPGTHTHWFSIDPTSGIITTAATLDYELEPQPQLIVVATDGGLPPLVSSATVSVALQDVNDNEPQFQRTFYNASLPEGTQPGTCFLQVTATDADSGPFGLLSYSLGAGLGASGSPPFRIDAHSGDVCTTRTLDRDQGPSSFDFTVTAIDGGGLKSMVYVKVFVADENDNPPQFYPREYAASLSAQSTPGTAVLRVHAHDPDQGPHGRLSYHILAGNSPPLFALDAHSGLLTVAWPLGRRANSVVQLEIGAQDGGGLQAEPIARVNISIVPGTPTPPIFEQLQYVFSVPEDVAPGTSVGIIQAHNPPGRLGPVTLTLSGGDPRGLFSLDSPSGLLKTLRPLDRELLGPVLELEVRAGSGTPPVFAVARIRVLLDDVNDNSPAFPAPEDTVLLPQNTAPGTPIYTLRALDPDSGANSRITFNLLAGGDGLFTVDPTTGHVRLMGPLGPPGGPAHELEVEARDGGSPPRTSHFRLRVVIQDLGIHGLAPRFDSPTYRVDLPSGTTTGTQILQVQAQAPDGSPVTYHLAADGASSPFGLESQSGWLWVRTALDRESQELYTLKVMAVSGSKAELGQQTGTATVRVIILNQNDHSPRLSEEPTFLAVAENQPPGTSVGRVFATDRDSGPNGRLTYSLQQLSEDSKAFRIHPQTGEVTTLQTLDREQQSSFQLLVQVQDGGSPPRSATGTVHVAVLDLNDNSPTFLQASGAAGGGLPIQVPDRVPPGTLVTTLQAKDPDEGENGTILYTLTGPGSELFSLHPHTGELHTAASLVRAERPHYVLTLSAHDQGSPPRSASLQLLVQVLPSTRVVESPDLIEADSAATVPVVLTVTAAEGLRPGSLLGSVAPQEPASVGVLTYTLVGGADPEGTFALDSASGRLYLARPLDFEAGPAWRALTVRAEGPGGAGARLLRVQVRVQDENEHAPTFARDPLALALPENPDPGATLYTFRASDADGPGPNSEVRYRLLRQEPPVPALRLDARTGALSAPRGLDRETTPALLLLVEATDRPANASRRRAARVSARVFVTDENDNAPVFASPSRVRLPEDQPPGPAALHVVARDPDLGEAARVSYRLAAGGDGHFRLHATTGALSVVRPLDREQRAEHVLTVVALDHGSPPRSSTQLLTVSVVDVNDEAPAFPQQEYNVILRENSPPGTSLLTLKATDPDLGANGQVTYGGVSGESFSLDPNTGVLTTLRALDREEQEEIYLTVYARDRGLPPLLTHITVRVTVEDENDHTPTFGNTHLSLEVPEGQDPQTLTTLRASDPDGGLNGQLQYRILDGDSSGAFALDLTSGEFGTMRPLDREVEPAFQLQIEARDGGQPALSATLLVTVTVLDANDHAPVFPVPSYSVEVPEDAPVGTLLLQLQAHDPDDGDNGRVMYYLGAGTAGAFLLEPTSGELSTATALDREHCASYAFSVTAVDGAAAGPLSTTVPITITVRDVNDHAPAFPTSPLRLRLPRPGPSLNKPTLALATLRAEDRDAGANASILYRLAGTPPPGTTVDSYTGEIRVARSPVALGPQDRVLFIVATDLGRPARSATGVVVVGIQGEPERGPRFPRTSSEAVLRENAPPGTPVISPKAVHSGGSNGPITYSILSGNERGIFSIQPSTGAITVRSAEGLDFETSPRLRLVLQAESGGAFAFSVLTLTLQDANDNAPRFLRPHYVAFLPESRPLEGPLLQVEADDLDQGSGGQISYSLAASQPARGLFHVDPATGTITTTAILDREIWAETRLVLMATDRGSPALVGSATLTVMVIDTNDNRPTIPQPWELRVSEDALLGSEIAQVTGNDVDSGPVLWYVLSPSGPQDPFSIGRYGGRVSLTGPLDFEQCDHYHLQLLAHDGPHEGHANLTVLVEDVNDNVPTFSQSLYQVMMLEHTPPGSAILSVSATDRDSGANGHISYHLASPAEGFRVDPNNGTLFTTVGAMALGHEGPGVVDVVLEARDHGAPGRTAQATVHVQLKDQNDHAPSFTLPHYRVAVSEDLPPGSTLLTLEATDADGSRTHATVDYSIISGNRGRVFQLEPRLAEVGDGVGPGPQALGCLVLLEPLDFESLTQYNLTVAAADRGQPPRSSAVPVTVTVLDVNDNPPVFTRASYRVTVPEDMPVGAELLHVEASDADPGPHGLVHFTLSSGDPLGLFELDENSGALRLSRPLDCETQAQHQLVVQAADPAGTHFSLVPVTVEVQDVNDHGPAFPLSLLSTSLAENQPPGTLVTTLHAIDGDAGTFGRLRYSLLEAVPGPEGREAFSLNSSTGELRARVPFDYEHTGSFRLLVGAADAGNLSASVTVSVLITGEDEYDPVFLAPSFHFQVPEGAQRGHSLGHVQATDEDGGADGLVLYSLATSSPYFGINQTTGALYLRVDSRAPGSGTTTSGGGGRTRREAPRELRLEVVARGPLPGSRSATVPVTVDITHTALGLAPDLNLLLVGAVAASLGVVVVLALAALVLGLVRARSRKAEAAPGPMSQTAPIASSSLQKLGREPPSPPPSEHLYHQTLPSYGGPGAGGPYPRGGSLDPSHSSGRGSAEAAEDDEIRMINEFPRVASVASSLAARGPDSGIQQDADGLSDTSCEPPAPDTWYKGRKAGLLLPGAGATLYREEGPPATATAFLGGCGLSPAPAGDYGFPADGKPCVAGALTAIVAGEEELRGSYNWDYLLSWCPQFQPLASVFTEIARLKDEARPCPPAPRIDPPPLITAVAHPGAKSVPPKPASTAVARAIFPPASHRSPISHEGSLSSAAMSPSFSPSLSPLAARSPVVSPFGVAQGPSASALSTESGLEPPDDTELRI.

An N-terminal signal peptide occupies residues 1-35; that stretch reads MQKELSVALSCPGMKSLRTLLPLLVLLGATVPGSW. Residues 36-2933 lie on the Extracellular side of the membrane; sequence GQAGSLDLQI…PDLNLLLVGA (2898 aa). 27 Cadherin domains span residues 37-137, 138-249, 250-356, 369-466, 476-572, 573-679, 680-784, 785-888, 889-994, 995-1105, 1100-1205, 1218-1317, 1326-1429, 1430-1539, 1539-1642, 1643-1744, 1745-1848, 1849-1953, 1976-2061, 2062-2164, 2165-2270, 2270-2369, 2370-2475, 2476-2595, 2596-2699, 2700-2806, and 2807-2926; these read QAGS…APAF, PQAR…APAF, NQSR…QPSM, VSEA…APAF, LPEV…EPQF, QRTF…PPQF, YPRE…PPIF, EQLQ…SPAF, PAPE…APRF, DSPT…EPTF, SEEP…SPTF, IQVP…SPDL, VPVV…APTF, ARDP…APVF, FASP…APAF, PQQE…TPTF, GNTH…APVF, PVPS…APAF, LATL…GPRF, PRTS…APRF, LRPH…RPTI, IPQP…VPTF, SQSL…APSF, TLPH…PPVF, TRAS…GPAF, PLSL…DPVF, and LAPS…APDL. Residue asparagine 396 is glycosylated (N-linked (GlcNAc...) asparagine). Residue asparagine 2354 is glycosylated (N-linked (GlcNAc...) asparagine). Residues 2867–2886 form a disordered region; that stretch reads SRAPGSGTTTSGGGGRTRRE. The chain crosses the membrane as a helical span at residues 2934 to 2954; it reads VAASLGVVVVLALAALVLGLV. Residues 2955 to 3291 lie on the Cytoplasmic side of the membrane; it reads RARSRKAEAA…EPPDDTELRI (337 aa). The segment at 2978 to 3033 is disordered; that stretch reads SLQKLGREPPSPPPSEHLYHQTLPSYGGPGAGGPYPRGGSLDPSHSSGRGSAEAAE. The span at 3004-3013 shows a compositional bias: gly residues; that stretch reads GGPGAGGPYP. Serine 3048 is modified (phosphoserine). Disordered regions lie at residues 3051-3081 and 3226-3291; these read SSLA…APDT and ASHR…ELRI. The segment covering 3237–3259 has biased composition (low complexity); it reads SLSSAAMSPSFSPSLSPLAARSP. Positions 3270 to 3279 are enriched in polar residues; it reads PSASALSTES.

As to quaternary structure, heterophilic interaction with FAT4; this interaction affects their respective protein levels. Expressed in the epicardium and atrioventricular sulcus (at protein level).

It localises to the cell membrane. In terms of biological role, calcium-dependent cell-adhesion protein. Mediates functions in neuroprogenitor cell proliferation and differentiation. In the heart, has a critical role for proper morphogenesis of the mitral valve, acting in the regulation of cell migration involved in valve formation. The chain is Protocadherin-16 (Dchs1) from Mus musculus (Mouse).